The primary structure comprises 137 residues: 2-iminobutanoate/2-iminopropanoate deaminase (137 aa).

S2 bears the N-acetylserine mark. N6-succinyllysine is present on residues K13 and K67. The residue at position 74 (T74) is a Phosphothreonine. The residue at position 136 (S136) is a Phosphoserine.

Homotrimer. Interacts with YTHDF2. Expressed by various malignant neoplasms.

The protein resides in the cytoplasm. Its subcellular location is the nucleus. The protein localises to the peroxisome. It is found in the mitochondrion. It carries out the reaction 2-iminobutanoate + H2O = 2-oxobutanoate + NH4(+). It catalyses the reaction 2-iminopropanoate + H2O = pyruvate + NH4(+). In terms of biological role, catalyzes the hydrolytic deamination of enamine/imine intermediates that form during the course of normal metabolism. May facilitate the release of ammonia from these potentially toxic reactive metabolites, reducing their impact on cellular components. It may act on enamine/imine intermediates formed by several types of pyridoxal-5'-phosphate-dependent dehydratases including L-threonine dehydratase. Also promotes endoribonucleolytic cleavage of some transcripts by promoting recruitment of the ribonuclease P/MRP complex. Acts by bridging YTHDF2 and the ribonuclease P/MRP complex. RIDA/HRSP12 binds to N6-methyladenosine (m6A)-containing mRNAs containing a 5'-GGUUC-3' motif: cooperative binding of RIDA/HRSP12 and YTHDF2 to such transcripts lead to recruitment of the ribonuclease P/MRP complex and subsequent endoribonucleolytic cleavage. This chain is 2-iminobutanoate/2-iminopropanoate deaminase, found in Capra hircus (Goat).